The following is a 139-amino-acid chain: Large ribosomal subunit protein uL16 (139 aa).

Belongs to the universal ribosomal protein uL16 family. In terms of assembly, part of the 50S ribosomal subunit.

Binds 23S rRNA and is also seen to make contacts with the A and possibly P site tRNAs. The sequence is that of Large ribosomal subunit protein uL16 (rplP) from Neorickettsia sennetsu (strain ATCC VR-367 / Miyayama) (Ehrlichia sennetsu).